We begin with the raw amino-acid sequence, 331 residues long: Fructose-1,6-bisphosphatase class 1 (331 aa).

Mg(2+) is bound by residues Glu88, Asp108, Leu110, and Asp111. Residues 111–114 (DGSS) and Asn201 contribute to the substrate site. A Mg(2+)-binding site is contributed by Glu273.

The protein belongs to the FBPase class 1 family. As to quaternary structure, homotetramer. Requires Mg(2+) as cofactor.

It localises to the cytoplasm. It catalyses the reaction beta-D-fructose 1,6-bisphosphate + H2O = beta-D-fructose 6-phosphate + phosphate. Its pathway is carbohydrate biosynthesis; gluconeogenesis. This Methylobacillus flagellatus (strain ATCC 51484 / DSM 6875 / VKM B-1610 / KT) protein is Fructose-1,6-bisphosphatase class 1.